A 284-amino-acid polypeptide reads, in one-letter code: Four and a half LIM domains protein 5 (284 aa).

The C4-type zinc finger occupies 8–32 (CQYCTASLLGKKYVLKDDSPYCVTC). LIM zinc-binding domains follow at residues 39-100 (NYCE…ECSS), 101-160 (KCFH…KEFA), 161-220 (HYCN…LYAN), and 223-283 (VACS…MDTD).

As to quaternary structure, interacts with CREM (via the third LIM domain). Interacts (via second LIM domain) with SPAG8. In terms of tissue distribution, testis-specific (at protein level).

It is found in the nucleus. Its function is as follows. May be involved in the regulation of spermatogenesis. Stimulates CREM transcriptional activity in a phosphorylation-independent manner. This chain is Four and a half LIM domains protein 5 (FHL5), found in Homo sapiens (Human).